A 108-amino-acid polypeptide reads, in one-letter code: UPF0060 membrane protein DSY4157 (108 aa).

Helical transmembrane passes span 6–26, 31–51, 60–80, and 86–106; these read ILFILAGLAEIGGGYLVWLWL, PYWYGVIGAIILVFYGIIPTL, VYAAYGGVFIILAVLWGWGVD, and TYDWIGAAICLVGVTVMLWAP.

It belongs to the UPF0060 family.

The protein localises to the cell membrane. The sequence is that of UPF0060 membrane protein DSY4157 from Desulfitobacterium hafniense (strain Y51).